The following is a 157-amino-acid chain: Endoribonuclease YbeY (157 aa).

Residues H111, H115, and H121 each coordinate Zn(2+). Residues 136–157 are disordered; that stretch reads ELLAELGHPDPYADDETDSITH. Over residues 147-157 the composition is skewed to acidic residues; it reads YADDETDSITH.

It belongs to the endoribonuclease YbeY family. Zn(2+) serves as cofactor.

It is found in the cytoplasm. Functionally, single strand-specific metallo-endoribonuclease involved in late-stage 70S ribosome quality control and in maturation of the 3' terminus of the 16S rRNA. The sequence is that of Endoribonuclease YbeY from Pseudomonas putida (strain ATCC 700007 / DSM 6899 / JCM 31910 / BCRC 17059 / LMG 24140 / F1).